The chain runs to 251 residues: uncharacterized protein (251 aa).

The protein belongs to the FAM243 family.

This is an uncharacterized protein from Homo sapiens (Human).